A 178-amino-acid polypeptide reads, in one-letter code: NAD(P)H-quinone oxidoreductase subunit 6, chloroplastic (178 aa).

A run of 5 helical transmembrane segments spans residues 10–30 (FILV…VLFT), 32–52 (PIYS…FYIL), 61–81 (AQLL…VMFM), 94–114 (LWTI…FSLI), and 154–174 (FFLP…GAIA).

The protein belongs to the complex I subunit 6 family. As to quaternary structure, NDH is composed of at least 16 different subunits, 5 of which are encoded in the nucleus.

The protein resides in the plastid. Its subcellular location is the chloroplast thylakoid membrane. The catalysed reaction is a plastoquinone + NADH + (n+1) H(+)(in) = a plastoquinol + NAD(+) + n H(+)(out). It catalyses the reaction a plastoquinone + NADPH + (n+1) H(+)(in) = a plastoquinol + NADP(+) + n H(+)(out). In terms of biological role, NDH shuttles electrons from NAD(P)H:plastoquinone, via FMN and iron-sulfur (Fe-S) centers, to quinones in the photosynthetic chain and possibly in a chloroplast respiratory chain. The immediate electron acceptor for the enzyme in this species is believed to be plastoquinone. Couples the redox reaction to proton translocation, and thus conserves the redox energy in a proton gradient. The chain is NAD(P)H-quinone oxidoreductase subunit 6, chloroplastic (ndhG) from Citrus sinensis (Sweet orange).